Here is a 124-residue protein sequence, read N- to C-terminus: Large ribosomal subunit protein eL22z (124 aa).

The protein belongs to the eukaryotic ribosomal protein eL22 family.

This chain is Large ribosomal subunit protein eL22z (RPL22B), found in Arabidopsis thaliana (Mouse-ear cress).